A 319-amino-acid chain; its full sequence is Small ribosomal subunit protein RACK1 (319 aa).

The residue at position 2 (Ala2) is an N-acetylalanine. WD repeat units lie at residues 15–55, 63–102, 105–145, 147–191, 194–233, 235–275, and 284–319; these read GHNG…QKFG, GHSHIVQDCTLTADGAYALSASWDKTLRLWDVATGETYQR, GHKS…ATLL, HNDW…IEAD, GHNSNINTLTASPDGTLIASAGKDGEIMLWNLAAKKAMYT, SAQD…DDLR, and AAEPHAVSLAWSADGQTLFAGYTDNVIRVWQVMTAN. Residues Lys46 and Lys53 each participate in a glycyl lysine isopeptide (Lys-Gly) (interchain with G-Cter in ubiquitin) cross-link. Thr96 is modified (phosphothreonine). Glycyl lysine isopeptide (Lys-Gly) (interchain with G-Cter in ubiquitin) cross-links involve residues Lys107, Lys137, and Lys161. The residue at position 168 (Thr168) is a Phosphothreonine.

This sequence belongs to the WD repeat G protein beta family. Ribosomal protein RACK1 subfamily. Component of the small ribosomal subunit (SSU). Mature yeast ribosomes consist of a small (40S) and a large (60S) subunit. The 40S small subunit contains 1 molecule of ribosomal RNA (18S rRNA) and 33 different proteins (encoded by 57 genes). The large 60S subunit contains 3 rRNA molecules (25S, 5.8S and 5S rRNA) and 46 different proteins (encoded by 81 genes). RACK1 is located at the head of the SSU in the vicinity of the mRNA exit channel. RACK1 interacts with the mRNA-binding protein SCP16. RACK1 also exists simultaneously as a homodimer in a cytosolic non-ribosome-bound form.

The protein resides in the cytoplasm. Component of the ribosome, a large ribonucleoprotein complex responsible for the synthesis of proteins in the cell. The small ribosomal subunit (SSU) binds messenger RNAs (mRNAs) and translates the encoded message by selecting cognate aminoacyl-transfer RNA (tRNA) molecules. The large subunit (LSU) contains the ribosomal catalytic site termed the peptidyl transferase center (PTC), which catalyzes the formation of peptide bonds, thereby polymerizing the amino acids delivered by tRNAs into a polypeptide chain. The nascent polypeptides leave the ribosome through a tunnel in the LSU and interact with protein factors that function in enzymatic processing, targeting, and the membrane insertion of nascent chains at the exit of the ribosomal tunnel. Located at the head of the 40S ribosomal subunit in the vicinity of the mRNA exit channel, RACK1 serves as a scaffold protein that can recruit other proteins to the ribosome. Involved in induction of the ribosome quality control (RQC) pathway; a pathway that degrades nascent peptide chains during problematic translation. Involved in the negative regulation of translation of a specific subset of proteins. In Saccharomyces cerevisiae (strain ATCC 204508 / S288c) (Baker's yeast), this protein is Small ribosomal subunit protein RACK1.